Consider the following 399-residue polypeptide: UDP-N-acetylglucosamine--N-acetylmuramyl-(pentapeptide) pyrophosphoryl-undecaprenol N-acetylglucosamine transferase (399 aa).

The segment at 1-31 is disordered; the sequence is MTSRFGHSQHPRRGRSARARAGRREGVQSNF. Basic residues predominate over residues 7–21; that stretch reads HSQHPRRGRSARARA. UDP-N-acetyl-alpha-D-glucosamine-binding positions include 58–60, Asn-170, Arg-206, Ser-234, Ile-288, and Gln-333; that span reads TGG.

It belongs to the glycosyltransferase 28 family. MurG subfamily.

Its subcellular location is the cell inner membrane. The enzyme catalyses di-trans,octa-cis-undecaprenyl diphospho-N-acetyl-alpha-D-muramoyl-L-alanyl-D-glutamyl-meso-2,6-diaminopimeloyl-D-alanyl-D-alanine + UDP-N-acetyl-alpha-D-glucosamine = di-trans,octa-cis-undecaprenyl diphospho-[N-acetyl-alpha-D-glucosaminyl-(1-&gt;4)]-N-acetyl-alpha-D-muramoyl-L-alanyl-D-glutamyl-meso-2,6-diaminopimeloyl-D-alanyl-D-alanine + UDP + H(+). Its pathway is cell wall biogenesis; peptidoglycan biosynthesis. Functionally, cell wall formation. Catalyzes the transfer of a GlcNAc subunit on undecaprenyl-pyrophosphoryl-MurNAc-pentapeptide (lipid intermediate I) to form undecaprenyl-pyrophosphoryl-MurNAc-(pentapeptide)GlcNAc (lipid intermediate II). This is UDP-N-acetylglucosamine--N-acetylmuramyl-(pentapeptide) pyrophosphoryl-undecaprenol N-acetylglucosamine transferase from Acidovorax sp. (strain JS42).